Consider the following 201-residue polypeptide: Holliday junction branch migration complex subunit RuvA (201 aa).

Residues 1–64 (MIGRLHGKII…EDAHLLFGFA (64 aa)) are domain I. The tract at residues 65-143 (QKQDRTLFRE…GVAQSDFFEE (79 aa)) is domain II. A flexible linker region spans residues 144 to 154 (HSVETIVATHS). Positions 154 to 201 (SHDPADEARDALVALGYKLADAEKMIKKVNKAGATSEQLIREALKASL) are domain III.

The protein belongs to the RuvA family. Homotetramer. Forms an RuvA(8)-RuvB(12)-Holliday junction (HJ) complex. HJ DNA is sandwiched between 2 RuvA tetramers; dsDNA enters through RuvA and exits via RuvB. An RuvB hexamer assembles on each DNA strand where it exits the tetramer. Each RuvB hexamer is contacted by two RuvA subunits (via domain III) on 2 adjacent RuvB subunits; this complex drives branch migration. In the full resolvosome a probable DNA-RuvA(4)-RuvB(12)-RuvC(2) complex forms which resolves the HJ.

Its subcellular location is the cytoplasm. In terms of biological role, the RuvA-RuvB-RuvC complex processes Holliday junction (HJ) DNA during genetic recombination and DNA repair, while the RuvA-RuvB complex plays an important role in the rescue of blocked DNA replication forks via replication fork reversal (RFR). RuvA specifically binds to HJ cruciform DNA, conferring on it an open structure. The RuvB hexamer acts as an ATP-dependent pump, pulling dsDNA into and through the RuvAB complex. HJ branch migration allows RuvC to scan DNA until it finds its consensus sequence, where it cleaves and resolves the cruciform DNA. This chain is Holliday junction branch migration complex subunit RuvA, found in Actinobacillus pleuropneumoniae serotype 7 (strain AP76).